Here is a 433-residue protein sequence, read N- to C-terminus: Serine/threonine-protein kinase KDX1 (433 aa).

The Protein kinase domain occupies 23-318; sequence FHLTGKIGRG…VEDALEHPYL (296 aa). ATP contacts are provided by residues 29 to 37 and K55; that span reads IGRGSHSLI. D153 functions as the Proton acceptor in the catalytic mechanism.

This sequence belongs to the protein kinase superfamily. Ser/Thr protein kinase family. As to quaternary structure, interacts with RLM1.

It catalyses the reaction L-seryl-[protein] + ATP = O-phospho-L-seryl-[protein] + ADP + H(+). The catalysed reaction is L-threonyl-[protein] + ATP = O-phospho-L-threonyl-[protein] + ADP + H(+). Functionally, serine/threonine-protein kinase involved in the SLT2 mitogen-activated (MAP) kinase signaling pathway that regulates cell wall integrity. May also be involved in the mating pheromone and the CWI MAPK pathways. This Saccharomyces cerevisiae (strain ATCC 204508 / S288c) (Baker's yeast) protein is Serine/threonine-protein kinase KDX1 (KDX1).